The following is a 338-amino-acid chain: Elongation factor Ts, mitochondrial (338 aa).

A mitochondrion-targeting transit peptide spans Met1–Lys42.

Belongs to the EF-Ts family.

The protein localises to the mitochondrion. Its function is as follows. Associates with the EF-Tu.GDP complex and induces the exchange of GDP to GTP. It remains bound to the aminoacyl-tRNA.EF-Tu.GTP complex up to the GTP hydrolysis stage on the ribosome. The chain is Elongation factor Ts, mitochondrial from Ostreococcus tauri.